The chain runs to 721 residues: Ribonucleoside-diphosphate reductase subunit alpha (721 aa).

Substrate-binding positions include Thr-159, 175 to 176 (SC), Gly-204, 384 to 388 (NLCSE), and 589 to 593 (PTGSI). The cysteines at positions 176 and 413 are disulfide-linked. The active-site Proton acceptor is the Asn-384. Cys-386 (cysteine radical intermediate) is an active-site residue. Glu-388 functions as the Proton acceptor in the catalytic mechanism.

The protein belongs to the ribonucleoside diphosphate reductase large chain family. As to quaternary structure, tetramer of two alpha and two beta subunits.

It catalyses the reaction a 2'-deoxyribonucleoside 5'-diphosphate + [thioredoxin]-disulfide + H2O = a ribonucleoside 5'-diphosphate + [thioredoxin]-dithiol. With respect to regulation, under complex allosteric control mediated by deoxynucleoside triphosphates and ATP binding. The type of nucleotide bound at the specificity site determines substrate preference. It seems probable that ATP makes the enzyme reduce CDP and UDP, dGTP favors ADP reduction and dTTP favors GDP reduction. In terms of biological role, provides the precursors necessary for DNA synthesis. Catalyzes the biosynthesis of deoxyribonucleotides from the corresponding ribonucleotides. This chain is Ribonucleoside-diphosphate reductase subunit alpha (nrdE), found in Mycoplasma genitalium (strain ATCC 33530 / DSM 19775 / NCTC 10195 / G37) (Mycoplasmoides genitalium).